The following is a 338-amino-acid chain: Bifunctional methylenetetrahydrofolate dehydrogenase/cyclohydrolase 2, mitochondrial (338 aa).

Residues 89–93 (YVRNK) and 136–138 (VQL) each bind substrate. Residues 205 to 207 (GRS) and Arg-238 each bind NAD(+). 314–318 (PGGVG) is a substrate binding site.

The protein belongs to the tetrahydrofolate dehydrogenase/cyclohydrolase family. Mg(2+) serves as cofactor. As to expression, widely expressed.

The protein localises to the mitochondrion inner membrane. It catalyses the reaction (6R)-5,10-methylene-5,6,7,8-tetrahydrofolate + NADP(+) = (6R)-5,10-methenyltetrahydrofolate + NADPH. The enzyme catalyses (6R)-5,10-methylene-5,6,7,8-tetrahydrofolate + NAD(+) = (6R)-5,10-methenyltetrahydrofolate + NADH. It carries out the reaction (6R)-5,10-methenyltetrahydrofolate + H2O = (6R)-10-formyltetrahydrofolate + H(+). It functions in the pathway one-carbon metabolism; tetrahydrofolate interconversion. Bifunctional mitochondrial folate-interconverting enzyme that has both NAD/NADP-dependent methylenetetrahydrofolate dehydrogenase and methenyltetrahydrofolate cyclohydrolase activities. In terms of biological role, has no NAD/NADP-dependent methylenetetrahydrofolate dehydrogenase activity. The polypeptide is Bifunctional methylenetetrahydrofolate dehydrogenase/cyclohydrolase 2, mitochondrial (Rattus norvegicus (Rat)).